A 442-amino-acid chain; its full sequence is Probable 6-phospho-beta-glucosidase (442 aa).

5-73 (LKIVTIGGGS…VPIDIHLTLD (69 aa)) provides a ligand contact to NAD(+). The substrate site is built by arginine 96 and asparagine 150. Residues cysteine 172 and histidine 202 each coordinate Mn(2+). Tyrosine 256 serves as the catalytic Proton acceptor.

The protein belongs to the glycosyl hydrolase 4 family. It depends on NAD(+) as a cofactor. A divalent metal cation serves as cofactor.

It catalyses the reaction 6-phospho-beta-D-glucosyl-(1-&gt;4)-D-glucose + H2O = D-glucose 6-phosphate + D-glucose. In terms of biological role, hydrolyzes phospho-beta-glucosides. The chain is Probable 6-phospho-beta-glucosidase (licH) from Bacillus subtilis (strain 168).